Consider the following 354-residue polypeptide: 3-isopropylmalate dehydrogenase (354 aa).

Glycine 76–glutamate 87 lines the NAD(+) pocket. Substrate-binding residues include arginine 94, arginine 104, arginine 130, and aspartate 215. Mg(2+)-binding residues include aspartate 215, aspartate 239, and aspartate 243. Glycine 273–asparagine 285 provides a ligand contact to NAD(+).

Belongs to the isocitrate and isopropylmalate dehydrogenases family. LeuB type 1 subfamily. Homodimer. Mg(2+) serves as cofactor. Mn(2+) is required as a cofactor.

The protein localises to the cytoplasm. It catalyses the reaction (2R,3S)-3-isopropylmalate + NAD(+) = 4-methyl-2-oxopentanoate + CO2 + NADH. It functions in the pathway amino-acid biosynthesis; L-leucine biosynthesis; L-leucine from 3-methyl-2-oxobutanoate: step 3/4. Catalyzes the oxidation of 3-carboxy-2-hydroxy-4-methylpentanoate (3-isopropylmalate) to 3-carboxy-4-methyl-2-oxopentanoate. The product decarboxylates to 4-methyl-2 oxopentanoate. This chain is 3-isopropylmalate dehydrogenase, found in Bacillus anthracis.